We begin with the raw amino-acid sequence, 129 residues long: MSNIPTELKYASSHEWIRKEEDGSYTVGITEHAQELLGDMVFVELPEVGDTVTAGDDCAVAESVKAASDIYAPISGEVIAVNEALEDSPELVNSDAYGEGWFFRVMPSDETEVDALLDAEGYQAVIDEE.

The Lipoyl-binding domain maps to 24–106 (SYTVGITEHA…YGEGWFFRVM (83 aa)). The residue at position 65 (Lys-65) is an N6-lipoyllysine.

This sequence belongs to the GcvH family. In terms of assembly, the glycine cleavage system is composed of four proteins: P, T, L and H. (R)-lipoate serves as cofactor.

Functionally, the glycine cleavage system catalyzes the degradation of glycine. The H protein shuttles the methylamine group of glycine from the P protein to the T protein. The polypeptide is Glycine cleavage system H protein (Shewanella putrefaciens (strain CN-32 / ATCC BAA-453)).